The primary structure comprises 468 residues: Sorting and assembly machinery component 50 homolog A (468 aa).

A disordered region spans residues 1–24 (MGTVHARSLDPLPMNGPDFGSPDD). One can recognise a POTRA domain in the interval 44 to 124 (VVVQRVHFEG…LDVTFEVTEL (81 aa)).

Belongs to the SAM50/omp85 family. Associates with the mitochondrial contact site and cristae organizing system (MICOS) complex (also known as MINOS or MitOS complex).

Its subcellular location is the mitochondrion outer membrane. May play a role in the maintenance of the structure of mitochondrial cristae. The sequence is that of Sorting and assembly machinery component 50 homolog A (samm50-a) from Xenopus laevis (African clawed frog).